The chain runs to 1005 residues: uncharacterized protein (1005 aa).

The N-terminal stretch at 1 to 24 (MKFQRKYWGLLSTLGVSSAVALSA) is a signal peptide. Cys25 carries the N-palmitoyl cysteine lipid modification. Cys25 carries the S-diacylglycerol cysteine lipid modification. 2 disordered regions span residues 105-165 (KKDK…EEKF) and 786-825 (TQKI…WDDV). Low complexity-rich tracts occupy residues 110-131 (TSSQ…TSTS) and 145-156 (QSSSNGQNNQQS). The span at 786–801 (TQKIDQQNTASTTSDV) shows a compositional bias: polar residues.

The protein localises to the cell membrane. This is an uncharacterized protein from Mycoplasma pneumoniae (strain ATCC 29342 / M129 / Subtype 1) (Mycoplasmoides pneumoniae).